Consider the following 243-residue polypeptide: Collagen triple helix repeat-containing protein 1 (243 aa).

A signal peptide spans 1-30; it reads MRPQGPAASPQRLRGLLLLLLLQLPAPSSA. Residues 57–90 enclose the Collagen-like domain; the sequence is QGPAGVPGRDGSPGANGIPGTPGIPGRDGFKGEK. The tract at residues 62-85 is disordered; the sequence is VPGRDGSPGANGIPGTPGIPGRDG. Asn186 is a glycosylation site (N-linked (GlcNAc...) asparagine).

In terms of processing, N-glycosylated. In terms of tissue distribution, isoform 1 is expressed in calcified atherosclerotic plaque and chondrocyte-like cells.

The protein localises to the secreted. Its subcellular location is the extracellular space. It is found in the extracellular matrix. Functionally, may act as a negative regulator of collagen matrix deposition. This chain is Collagen triple helix repeat-containing protein 1 (CTHRC1), found in Homo sapiens (Human).